The following is a 695-amino-acid chain: Elongation factor G (695 aa).

The 275-residue stretch at 9–283 (EKIRNIGIVA…AVIDYLPSPL (275 aa)) folds into the tr-type G domain. Residues 18–25 (AHIDAGKT), 82–86 (DTPGH), and 136–139 (NKMD) contribute to the GTP site.

It belongs to the TRAFAC class translation factor GTPase superfamily. Classic translation factor GTPase family. EF-G/EF-2 subfamily.

Its subcellular location is the cytoplasm. Functionally, catalyzes the GTP-dependent ribosomal translocation step during translation elongation. During this step, the ribosome changes from the pre-translocational (PRE) to the post-translocational (POST) state as the newly formed A-site-bound peptidyl-tRNA and P-site-bound deacylated tRNA move to the P and E sites, respectively. Catalyzes the coordinated movement of the two tRNA molecules, the mRNA and conformational changes in the ribosome. The polypeptide is Elongation factor G (Petrotoga mobilis (strain DSM 10674 / SJ95)).